The sequence spans 31 residues: Acetyl-CoA carboxylase (31 aa).

The segment at 1–31 (RISSSVIAHKTQLDSGKREVYSSHMQLGGPK) is disordered. The segment covering 11–21 (TQLDSGKREVY) has biased composition (basic and acidic residues).

The enzyme catalyses hydrogencarbonate + acetyl-CoA + ATP = malonyl-CoA + ADP + phosphate + H(+). It participates in lipid metabolism; malonyl-CoA biosynthesis; malonyl-CoA from acetyl-CoA: step 1/1. The protein is Acetyl-CoA carboxylase of Catharanthus roseus (Madagascar periwinkle).